The sequence spans 928 residues: MVQIPENPLILVDGSSYLYRAYHAFPPLTNSAGEPTGAMYGVLNMLRSLIMQYQPTHAAVVFDAKGKTFRDELFEHYKSHRPPMPDDLRAQIEPLHAMVKAMGLPLLAVSGVEADDVIGTLAREAEKVGRPVLISTGDKDMAQLVTPNITLINTMTNTILGPDEVVNKYGVPPELIIDFLALMGDSSDNIPGVPGVGEKTAQALLQGLGGLDTLYAEPEKIAGLTFRGAKTMAGKLAQNKDVAYLSYKLATIKTDVELELTCEQLEVQQPIADELLGLFKKYEFKRWTADVESGKWLQAKGAKPAAKPQETVVIDESPSEPAAALSYENYVTILDDVTLESWIEKLKKAPVFAFDTETDSLDNIAANLVGLSFAIEPGVAAYVPVAHDYLDAPDQISRQRALELLKPLLEDEKVRKVGQNLKYDRGVLQNYGIELRGIAFDTMLESYILNSVAGRHDMDSLSDRWLKHKTITFEDIAGKGKNQLTFNQIALEEAGRYAAEDADVTLQLHLKMWPELQQHKGPLNVFENIEMPLVPVLSRVERNGVKIDPAVLHKHSEEITLRLAELEKKAHDIAGEAFNLSSTKQLQTILFEKQGIKPLKKTPGGAPSTSEEVLEELALDYPLPKVILEYRGLAKLKSTYTDKLPLMINPKTGRVHTSYHQAVTATGRLSSTDPNLQNIPVRNEEGRRIRQAFIAPEDYLIVSADYSQIELRIMAHLSRDKGLLTAFAEGKDIHRATAAEVFGLPLDSVTGEQRRSAKAINFGLIYGMSAFGLSRQLNIPRKEAQKYMDLYFERYPGVLEYMERTRAQAKEQGYVETLEGRRLYLPDIKSSNAARRAGAERAAINAPMQGTAADIIKRAMIAVDAWLQAEQPRVRMIMQVHDELVFEVHKDDLDAVAKRIHQLMENCTRIDVPLLVEVGSGENWDQAH.

The 5'-3' exonuclease domain occupies 1-323 (MVQIPENPLI…IDESPSEPAA (323 aa)). In terms of domain architecture, 3'-5' exonuclease spans 324–517 (ALSYENYVTI…LHLKMWPELQ (194 aa)). The tract at residues 324-928 (ALSYENYVTI…GSGENWDQAH (605 aa)) is klenow fragment. The polymerase stretch occupies residues 521-928 (GPLNVFENIE…GSGENWDQAH (408 aa)).

This sequence belongs to the DNA polymerase type-A family. In terms of assembly, single-chain monomer with multiple functions.

It carries out the reaction DNA(n) + a 2'-deoxyribonucleoside 5'-triphosphate = DNA(n+1) + diphosphate. Functionally, in addition to polymerase activity, this DNA polymerase exhibits 3'-5' and 5'-3' exonuclease activity. It is able to utilize nicked circular duplex DNA as a template and can unwind the parental DNA strand from its template. The chain is DNA polymerase I (polA) from Salmonella typhimurium (strain LT2 / SGSC1412 / ATCC 700720).